The primary structure comprises 59 residues: UPF0434 protein Mmc1_0910 (59 aa).

The protein belongs to the UPF0434 family.

The chain is UPF0434 protein Mmc1_0910 from Magnetococcus marinus (strain ATCC BAA-1437 / JCM 17883 / MC-1).